The chain runs to 115 residues: Migration and invasion enhancer 1 (115 aa).

Over residues 1-10 (MSGDTGTTSV) the composition is skewed to polar residues. Residues 1 to 22 (MSGDTGTTSVAPPPGETEPGHG) form a disordered region. Position 2 is an N-acetylserine (Ser2). Cys30 and Cys33 are joined by a disulfide. Cys112 carries S-geranylgeranyl cysteine lipidation. A propeptide spans 113 to 115 (VIL) (removed in mature form).

Belongs to the SelWTH family. Interacts with GPX1. Isoprenylation facilitates association with the plasma membrane and enhances the migratory phenotype of cells by inducing increased filopodia formation.

Its subcellular location is the cytoplasm. It localises to the cytosol. It is found in the cell membrane. In terms of biological role, increases cell migration by inducing filopodia formation at the leading edge of migrating cells. Plays a role in regulation of apoptosis, possibly through control of CASP3. May be involved in a redox-related process. The sequence is that of Migration and invasion enhancer 1 (MIEN1) from Bos taurus (Bovine).